A 1734-amino-acid polypeptide reads, in one-letter code: Gag-pol polyprotein (1734 aa).

A lipid anchor (N-myristoyl glycine; by host) is attached at Gly-2. Positions 109-112 (PTAP) match the PTAP/PSAP motif motif. The interval 112–217 (PILPSGPSTQ…STTSRAFPLR (106 aa)) is disordered. The short motif at 128–132 (LYPAF) is the LYPX(n)L motif element. A PPXY motif motif is present at residues 161–164 (PPPY). Phosphoserine; by host is present on Ser-191. Positions 344–392 (GRSPTNLAKVKGITQGPNESPSAFLERLKEAYRRYTPYDPEDPGQETNV) are interaction with host PIAS4. Residues 429–434 (IFNKRE) form an interaction with host UBE2I region. Basic and acidic residues-rich tracts occupy residues 433–474 (RETP…REMS) and 485–498 (RQDR…RPQL). Disordered stretches follow at residues 433-498 (RETP…RPQL) and 512-551 (WAKD…EPRI). A CCHC-type zinc finger spans residues 501-518 (DQCAYCKEKGHWAKDCPK). One can recognise a Peptidase A2 domain in the interval 560-630 (VTFLVDTGAQ…CPYPLLGRDL (71 aa)). Asp-565 acts as the Protease; shared with dimeric partner in catalysis. The 192-residue stretch at 740–931 (LDQGILVPCQ…KQVKYLGYLL (192 aa)) folds into the Reverse transcriptase domain. Residues Asp-808, Asp-882, Asp-883, Asp-1182, Glu-1220, Asp-1241, and Asp-1311 each contribute to the Mg(2+) site. The 147-residue stretch at 1173–1319 (PDADHTWYTD…ADQAAREAAI (147 aa)) folds into the RNase H type-1 domain. Residues 1386-1426 (HRLTHLGYQKMKALLDRGESPYYMLNRDKTLQYVADSCTVC) form an HHCC-type zinc finger. Residues 1443–1601 (RGHRPGTHWE…TPYEILYGAP (159 aa)) form the Integrase catalytic domain. Mg(2+) contacts are provided by Asp-1454 and Asp-1513.

In terms of assembly, homohexamer; further associates as homomultimer. The virus core is composed of a lattice formed from hexagonal rings, each containing six capsid monomers. Interacts with mouse UBE2I and mouse PIAS4. As to quaternary structure, interacts (via PPXY motif) with host NEDD4. Interacts (via PSAP motif) with host TSG101. Interacts (via LYPX(n)L motif) with host PDCD6IP. The reverse transcriptase is a monomer (Potential). Interacts (via RNase domains) with host release factor ETF1; this interaction is essential for translational readthrough of amber codon between viral gag and pol genes, as well as for viral replication. In terms of assembly, homodimer. It depends on Mg(2+) as a cofactor. Ubiquitinated by ITCH. Gag can recruit the ubiquitin ligase Itch in an L domain-independent manner to facilitate virus release via a mechanism that involves Gag ubiquitination. Post-translationally, specific enzymatic cleavages by the viral protease yield mature proteins. The protease is released by autocatalytic cleavage. The polyprotein is cleaved during and after budding, this process is termed maturation. In terms of processing, sumoylated; which is required for virus replication. Phosphorylated on serine residues.

The protein localises to the virion. It localises to the host cell membrane. It is found in the host late endosome membrane. Its subcellular location is the host endosome. The protein resides in the host multivesicular body. The protein localises to the host cytoplasm. It carries out the reaction DNA(n) + a 2'-deoxyribonucleoside 5'-triphosphate = DNA(n+1) + diphosphate. The catalysed reaction is Endonucleolytic cleavage to 5'-phosphomonoester.. With respect to regulation, most efficiently inhibited by Amprenavir, which is able to block Gag-Pol processing in infected cells. Functionally, plays a role in budding and is processed by the viral protease during virion maturation outside the cell. During budding, it recruits, in a PPXY-dependent or independent manner, Nedd4-like ubiquitin ligases that conjugate ubiquitin molecules to Gag-Pol, or to Gag-Pol binding host factors. Interaction with HECT ubiquitin ligases probably links the viral protein to the host ESCRT pathway and facilitates release. Targets Gag and gag-pol polyproteins to the plasma membrane via a multipartite membrane binding signal, that includes its myristoylated N-terminus. Also mediates nuclear localization of the pre-integration complex. Its function is as follows. Constituent of the pre-integration complex (PIC) which tethers the latter to mitotic chromosomes. This allows the integration of the viral genome into the host DNA. In terms of biological role, forms the spherical core of the virion that encapsulates the genomic RNA-nucleocapsid complex. Functionally, involved in the packaging and encapsidation of two copies of the genome. Binds with high affinity to conserved UCUG elements within the packaging signal, located near the 5'-end of the genome. This binding is dependent on genome dimerization. Acts as a nucleic acid chaperone which is involved in rearrangement of nucleic acid secondary structures during gRNA retrotranscription. The aspartyl protease mediates proteolytic cleavages of Gag and Gag-Pol polyproteins during or shortly after the release of the virion from the plasma membrane. Cleavages take place as an ordered, step-wise cascade to yield mature proteins. This process is called maturation. Displays maximal activity during the budding process just prior to particle release from the cell (Potential). Cleaves the translation initiation factor eIF4G leading to the inhibition of host cap-dependent translation. Its function is as follows. RT is a multifunctional enzyme that converts the viral dimeric RNA genome into dsDNA in the cytoplasm, shortly after virus entry into the cell. This enzyme displays a DNA polymerase activity that can copy either DNA or RNA templates, and a ribonuclease H (RNase H) activity that cleaves the RNA strand of RNA-DNA heteroduplexes in a partially processive 3' to 5' endonucleasic mode. Conversion of viral genomic RNA into dsDNA requires many steps. A tRNA binds to the primer-binding site (PBS) situated at the 5' end of the viral RNA. RT uses the 3' end of the tRNA primer to perform a short round of RNA-dependent minus-strand DNA synthesis. The reading proceeds through the U5 region and ends after the repeated (R) region which is present at both ends of viral RNA. The portion of the RNA-DNA heteroduplex is digested by the RNase H, resulting in a ssDNA product attached to the tRNA primer. This ssDNA/tRNA hybridizes with the identical R region situated at the 3' end of viral RNA. This template exchange, known as minus-strand DNA strong stop transfer, can be either intra- or intermolecular. RT uses the 3' end of this newly synthesized short ssDNA to perform the RNA-dependent minus-strand DNA synthesis of the whole template. RNase H digests the RNA template except for a polypurine tract (PPT) situated at the 5' end of the genome. It is not clear if both polymerase and RNase H activities are simultaneous. RNase H probably can proceed both in a polymerase-dependent (RNA cut into small fragments by the same RT performing DNA synthesis) and a polymerase-independent mode (cleavage of remaining RNA fragments by free RTs). Secondly, RT performs DNA-directed plus-strand DNA synthesis using the PPT that has not been removed by RNase H as primers. PPT and tRNA primers are then removed by RNase H. The 3' and 5' ssDNA PBS regions hybridize to form a circular dsDNA intermediate. Strand displacement synthesis by RT to the PBS and PPT ends produces a blunt ended, linear dsDNA copy of the viral genome that includes long terminal repeats (LTRs) at both ends. In terms of biological role, catalyzes viral DNA integration into the host chromosome, by performing a series of DNA cutting and joining reactions. This enzyme activity takes place after virion entry into a cell and reverse transcription of the RNA genome in dsDNA. The first step in the integration process is 3' processing. This step requires a complex comprising the viral genome, matrix protein and integrase. This complex is called the pre-integration complex (PIC). The integrase protein removes 2 nucleotides from each 3' end of the viral DNA, leaving recessed CA OH's at the 3' ends. In the second step that requires cell division, the PIC enters cell nucleus. In the third step, termed strand transfer, the integrase protein joins the previously processed 3' ends to the 5' ends of strands of target cellular DNA at the site of integration. The last step is viral DNA integration into host chromosome. This chain is Gag-pol polyprotein (gag-pol), found in Mus musculus (Mouse).